The following is a 725-amino-acid chain: Glyoxysomal fatty acid beta-oxidation multifunctional protein MFP-a (725 aa).

In the N-terminal section; belongs to the enoyl-CoA hydratase/isomerase family. The protein in the central section; belongs to the 3-hydroxyacyl-CoA dehydrogenase family.

The protein resides in the glyoxysome. The enzyme catalyses a (3S)-3-hydroxyacyl-CoA = a (2E)-enoyl-CoA + H2O. It catalyses the reaction a 4-saturated-(3S)-3-hydroxyacyl-CoA = a (3E)-enoyl-CoA + H2O. The catalysed reaction is a (3Z)-enoyl-CoA = a 4-saturated (2E)-enoyl-CoA. It carries out the reaction a (3E)-enoyl-CoA = a 4-saturated (2E)-enoyl-CoA. The enzyme catalyses (3S)-3-hydroxybutanoyl-CoA = (3R)-3-hydroxybutanoyl-CoA. It catalyses the reaction a (3S)-3-hydroxyacyl-CoA + NAD(+) = a 3-oxoacyl-CoA + NADH + H(+). It functions in the pathway lipid metabolism; fatty acid beta-oxidation. This is Glyoxysomal fatty acid beta-oxidation multifunctional protein MFP-a from Cucumis sativus (Cucumber).